Here is a 231-residue protein sequence, read N- to C-terminus: tRNA (guanine-N(1)-)-methyltransferase (231 aa).

S-adenosyl-L-methionine-binding positions include G112 and 132–137 (IGDYIL).

The protein belongs to the RNA methyltransferase TrmD family. As to quaternary structure, homodimer.

Its subcellular location is the cytoplasm. The enzyme catalyses guanosine(37) in tRNA + S-adenosyl-L-methionine = N(1)-methylguanosine(37) in tRNA + S-adenosyl-L-homocysteine + H(+). Its function is as follows. Specifically methylates guanosine-37 in various tRNAs. The chain is tRNA (guanine-N(1)-)-methyltransferase from Sulfurimonas denitrificans (strain ATCC 33889 / DSM 1251) (Thiomicrospira denitrificans (strain ATCC 33889 / DSM 1251)).